The sequence spans 500 residues: L-arabinose isomerase (500 aa).

Mn(2+) is bound by residues E306, E333, H350, and H450.

The protein belongs to the arabinose isomerase family. Homohexamer. Mn(2+) serves as cofactor.

The catalysed reaction is beta-L-arabinopyranose = L-ribulose. Its pathway is carbohydrate degradation; L-arabinose degradation via L-ribulose; D-xylulose 5-phosphate from L-arabinose (bacterial route): step 1/3. Its function is as follows. Catalyzes the conversion of L-arabinose to L-ribulose. In Salmonella choleraesuis (strain SC-B67), this protein is L-arabinose isomerase.